Consider the following 109-residue polypeptide: uncharacterized protein (109 aa).

The protein to A.fulgidus AF1885.

This is an uncharacterized protein from Methanocaldococcus jannaschii (strain ATCC 43067 / DSM 2661 / JAL-1 / JCM 10045 / NBRC 100440) (Methanococcus jannaschii).